Reading from the N-terminus, the 385-residue chain is Methionine aminopeptidase 1 (385 aa).

The C6H2-type zinc-finger motif lies at 6-59 (TRVCETAGCSSEAKLQCPTCLKLGIQGSYFCSQECFKGSWATHKLLHKKAKDEK). 8 residues coordinate Zn(2+): Cys-9, Cys-14, Cys-22, Cys-25, Cys-36, Cys-40, His-48, and His-52. His-203 is a binding site for a protein. Zn(2+) is bound by residues Asp-220, Asp-231, and His-294. Residue His-301 participates in a protein binding. Positions 327 and 358 each coordinate Zn(2+).

Belongs to the peptidase M24A family. Methionine aminopeptidase type 1 subfamily. In terms of assembly, associates with the 60S ribosomal subunit of the 80S translational complex. The cofactor is Zn(2+). It depends on Co(2+) as a cofactor. Mn(2+) serves as cofactor. Requires Fe(2+) as cofactor.

Its subcellular location is the cytoplasm. It catalyses the reaction Release of N-terminal amino acids, preferentially methionine, from peptides and arylamides.. Functionally, cotranslationally removes the N-terminal methionine from nascent proteins. The N-terminal methionine is often cleaved when the second residue in the primary sequence is small and uncharged (Met-Ala-, Cys, Gly, Pro, Ser, Thr, or Val). This Gallus gallus (Chicken) protein is Methionine aminopeptidase 1 (METAP1).